Here is a 177-residue protein sequence, read N- to C-terminus: ATP synthase subunit b, chloroplastic (177 aa).

A helical membrane pass occupies residues 26–44 (IINLSIVLFVVIRFLGEAL).

Belongs to the ATPase B chain family. As to quaternary structure, F-type ATPases have 2 components, F(1) - the catalytic core - and F(0) - the membrane proton channel. F(1) has five subunits: alpha(3), beta(3), gamma(1), delta(1), epsilon(1). F(0) has four main subunits: a(1), b(1), b'(1) and c(10-14). The alpha and beta chains form an alternating ring which encloses part of the gamma chain. F(1) is attached to F(0) by a central stalk formed by the gamma and epsilon chains, while a peripheral stalk is formed by the delta, b and b' chains.

Its subcellular location is the plastid. It localises to the chloroplast thylakoid membrane. F(1)F(0) ATP synthase produces ATP from ADP in the presence of a proton or sodium gradient. F-type ATPases consist of two structural domains, F(1) containing the extramembraneous catalytic core and F(0) containing the membrane proton channel, linked together by a central stalk and a peripheral stalk. During catalysis, ATP synthesis in the catalytic domain of F(1) is coupled via a rotary mechanism of the central stalk subunits to proton translocation. Its function is as follows. Component of the F(0) channel, it forms part of the peripheral stalk, linking F(1) to F(0). This is ATP synthase subunit b, chloroplastic from Bigelowiella natans (Pedinomonas minutissima).